Here is a 164-residue protein sequence, read N- to C-terminus: Hoefavidin (164 aa).

The signal sequence occupies residues 1–22 (MNKVLAIVLTITVAGFAQTAFA). The 124-residue stretch at 32 to 155 (KLLAGASNWV…GQDDFMQSVA (124 aa)) folds into the Avidin-like domain. Positions 42, 46, 68, 70, and 76 each coordinate biotin. Cysteine 77 and cysteine 108 are oxidised to a cystine. Biotin-binding residues include serine 110, threonine 112, and aspartate 148.

The protein belongs to the avidin/streptavidin family. As to quaternary structure, exhibits a dynamic oligomeric assembly: the apo form exits as homooctamers, which dissociate into homodimers upon biotin binding. The X-ray structure of the intact hoefavidin reveals unique crystal packing generated by an octameric cylindrical structure wherein the C-terminal segments of each monomer are introduced into the entrance of the biotin-binding site of an adjacent non-canonical monomer.

Its subcellular location is the secreted. Functionally, the exact role played by hoefavidin in the host organism is still obscure. Forms a strong non-covalent complex with biotin and 2-iminobiotin. This chain is Hoefavidin, found in Hoeflea phototrophica (strain DSM 17068 / NCIMB 14078 / DFL-43).